Consider the following 40-residue polypeptide: Large ribosomal subunit protein bL33c (40 aa).

Belongs to the bacterial ribosomal protein bL33 family.

It is found in the plastid. It localises to the chloroplast. The chain is Large ribosomal subunit protein bL33c (rpl33) from Pisum sativum (Garden pea).